Consider the following 364-residue polypeptide: Chorismate synthase (364 aa).

Arg47 and Arg53 together coordinate NADP(+). Residues 124–126 (RSS), Gly286, 301–305 (KPTAT), and Arg327 contribute to the FMN site.

The protein belongs to the chorismate synthase family. Homotetramer. It depends on FMNH2 as a cofactor.

The catalysed reaction is 5-O-(1-carboxyvinyl)-3-phosphoshikimate = chorismate + phosphate. It participates in metabolic intermediate biosynthesis; chorismate biosynthesis; chorismate from D-erythrose 4-phosphate and phosphoenolpyruvate: step 7/7. Catalyzes the anti-1,4-elimination of the C-3 phosphate and the C-6 proR hydrogen from 5-enolpyruvylshikimate-3-phosphate (EPSP) to yield chorismate, which is the branch point compound that serves as the starting substrate for the three terminal pathways of aromatic amino acid biosynthesis. This reaction introduces a second double bond into the aromatic ring system. The polypeptide is Chorismate synthase (Acaryochloris marina (strain MBIC 11017)).